The chain runs to 167 residues: Ribosome maturation factor RimM (167 aa).

The region spanning 94-165 (EHEYYYSDII…TIKITPMEGL (72 aa)) is the PRC barrel domain.

Belongs to the RimM family. Binds ribosomal protein uS19.

Its subcellular location is the cytoplasm. Functionally, an accessory protein needed during the final step in the assembly of 30S ribosomal subunit, possibly for assembly of the head region. Essential for efficient processing of 16S rRNA. May be needed both before and after RbfA during the maturation of 16S rRNA. It has affinity for free ribosomal 30S subunits but not for 70S ribosomes. The protein is Ribosome maturation factor RimM of Staphylococcus epidermidis (strain ATCC 12228 / FDA PCI 1200).